Consider the following 372-residue polypeptide: Glutamine synthetase (372 aa).

The 80-residue stretch at 24 to 103 (VIAEYVWVDG…VLAECFNSDG (80 aa)) folds into the GS beta-grasp domain. The 263-residue stretch at 110–372 (HRHEANKLFQ…KEYERETNEQ (263 aa)) folds into the GS catalytic domain.

The protein belongs to the glutamine synthetase family. In terms of assembly, homooctamer.

The protein resides in the cytoplasm. It catalyses the reaction L-glutamate + NH4(+) + ATP = L-glutamine + ADP + phosphate + H(+). The sequence is that of Glutamine synthetase (GLN1) from Candida glabrata (strain ATCC 2001 / BCRC 20586 / JCM 3761 / NBRC 0622 / NRRL Y-65 / CBS 138) (Yeast).